The sequence spans 130 residues: Fumarate reductase subunit C (130 aa).

3 consecutive transmembrane segments (helical) span residues 30 to 50 (EGTSIPAVWFSVLLIYGVFAL), 60 to 80 (FVSFLQNPLVLFLNILTLFAA), and 110 to 130 (IKALWVVTVVASAIILAVALL).

The protein belongs to the FrdC family. Part of an enzyme complex containing four subunits: a flavoprotein (FrdA), an iron-sulfur protein (FrdB), and two hydrophobic anchor proteins (FrdC and FrdD).

Its subcellular location is the cell inner membrane. Two distinct, membrane-bound, FAD-containing enzymes are responsible for the catalysis of fumarate and succinate interconversion; fumarate reductase is used in anaerobic growth, and succinate dehydrogenase is used in aerobic growth. Anchors the catalytic components of the fumarate reductase complex to the cell inner membrane, binds quinones. This chain is Fumarate reductase subunit C, found in Yersinia pseudotuberculosis serotype O:1b (strain IP 31758).